A 325-amino-acid chain; its full sequence is uncharacterized protein (325 aa).

2 disordered regions span residues 32-65 and 99-152; these read LSTPVYRKKSRRSVSQSRPTSIIEPPKRSIVPPI and GDSL…ASSG. The Globin domain occupies 153-291; sequence LVPSLNRLRI…LFTGVRDGYY (139 aa).

This is an uncharacterized protein from Caenorhabditis elegans.